The sequence spans 207 residues: Ras-related protein Rab-8A (207 aa).

GTP-binding residues include serine 17, glycine 18, valine 19, glycine 20, lysine 21, threonine 22, cysteine 23, serine 35, serine 39, and threonine 40. A Mg(2+)-binding site is contributed by threonine 22. Short sequence motifs (switch) lie at residues 31–45 (DAFN…GIDF) and 63–80 (DTAG…YYRG). Threonine 40 and aspartate 63 together coordinate Mg(2+). Glycine 66 serves as a coordination point for GTP. Threonine 72 bears the Phosphothreonine; by LRRK2 mark. GTP contacts are provided by asparagine 121, lysine 122, aspartate 124, alanine 152, and lysine 153. Phosphoserine is present on residues serine 181 and serine 185. Cysteine 204 bears the Cysteine methyl ester mark. A lipid anchor (S-geranylgeranyl cysteine) is attached at cysteine 204. A propeptide spans 205–207 (SLL) (removed in mature form).

The protein belongs to the small GTPase superfamily. Rab family. As to quaternary structure, interacts (GTP-bound form) with MICALL1; regulates RAB8A association with recycling endosomes. Interacts with MICALL2; competes with RAB13 and is involved in E-cadherin endocytic recycling. Interacts (GTP-bound form) with MICAL1, MICALCL, MICAL3 and EHBP1L1; two molecules of RAB8A can bind to one molecule of the effector protein; ternary complexes of RAB8A, RAB13 and either MICAL1 or EHBP1L1 are possible. Interacts (GTP-bound form) with EHBP1. Interacts with EHD1. Interacts with MAP4K2 and SYTL4. Interacts with SGSM1 and SGSM3. Interacts with RABIF, RIMS2, RPH3A and RPH3A. Interacts with OPTN. Interacts with MYO5B. Interacts with CIMAP3. Interacts with BIRC6/bruce. Interacts with OCRL. Interacts with AHI1. Interacts with DCDC1. Interacts with LRRK2; interaction facilitates phosphorylation of Thr-72. Interacts with RAB31P, GDI1, GDI2, CHM, CHML, RABGGTA, RABGGTB, TBC1D15 and INPP5B; these interactions are dependent on Thr-72 not being phosphorylated. Interacts with RILPL1 and RILPL2; these interactions are dependent on the phosphorylation of Thr-72 by LRRK2. Interacts with DZIP1; prevents inhibition by the GDP-dissociation inhibitor GDI2. Interacts with RAB3IP/Rabin8, RAB3IP functions as guanine exchange factor (GEF) towards RAB8A. Interacts (in GDP-bound form) with RPGR, RPGR functions as GEF towards RAB8A. It depends on Mg(2+) as a cofactor. In terms of processing, phosphorylation of Thr-72 in the switch II region by LRRK2 prevents the association of RAB regulatory proteins, including CHM, CHML and RAB GDP dissociation inhibitors GDI1 and GDI2. Phosphorylation by LRRK2 is required for localization to stressed lysosomes.

The protein localises to the cell membrane. Its subcellular location is the golgi apparatus. It is found in the endosome membrane. The protein resides in the recycling endosome membrane. It localises to the cell projection. The protein localises to the cilium. Its subcellular location is the cytoplasmic vesicle. It is found in the phagosome membrane. The protein resides in the cytoplasm. It localises to the cytoskeleton. The protein localises to the microtubule organizing center. Its subcellular location is the centrosome. It is found in the centriole. The protein resides in the cilium basal body. It localises to the midbody. The protein localises to the lysosome. It catalyses the reaction GTP + H2O = GDP + phosphate + H(+). Its activity is regulated as follows. Regulated by guanine nucleotide exchange factors (GEFs) such as RAB3IP/Rabin8 and RPGR which promote the exchange of bound GDP for free GTP, GTPase activating proteins (GAPs) which increase the GTP hydrolysis activity, and GDP dissociation inhibitors (GDIs) which inhibit the dissociation of the nucleotide from the GTPase. Activated in response to insulin. In terms of biological role, the small GTPases Rab are key regulators of intracellular membrane trafficking, from the formation of transport vesicles to their fusion with membranes. Rabs cycle between an inactive GDP-bound form and an active GTP-bound form that is able to recruit to membranes different sets of downstream effectors directly responsible for vesicle formation, movement, tethering and fusion. RAB8A is involved in polarized vesicular trafficking and neurotransmitter release. Together with RAB11A, RAB3IP, the exocyst complex, PARD3, PRKCI, ANXA2, CDC42 and DNMBP promotes transcytosis of PODXL to the apical membrane initiation sites (AMIS), apical surface formation and lumenogenesis. Regulates the compacted morphology of the Golgi. Together with MYO5B and RAB11A participates in epithelial cell polarization. Also involved in membrane trafficking to the cilium and ciliogenesis. Together with MICALL2, may also regulate adherens junction assembly. May play a role in insulin-induced transport to the plasma membrane of the glucose transporter GLUT4 and therefore play a role in glucose homeostasis. Involved in autophagy. Participates in the export of a subset of neosynthesized proteins through a Rab8-Rab10-Rab11-dependent endososomal export route. Targeted to and stabilized on stressed lysosomes through LRRK2 phosphorylation. Suppresses stress-induced lysosomal enlargement through EHBP1 and EHNP1L1 effector proteins. This Mus musculus (Mouse) protein is Ras-related protein Rab-8A.